Consider the following 310-residue polypeptide: Ribosomal RNA small subunit methyltransferase H (310 aa).

Residues 32–34 (GGH), aspartate 52, phenylalanine 79, aspartate 100, and glutamine 107 contribute to the S-adenosyl-L-methionine site.

Belongs to the methyltransferase superfamily. RsmH family.

It localises to the cytoplasm. The catalysed reaction is cytidine(1402) in 16S rRNA + S-adenosyl-L-methionine = N(4)-methylcytidine(1402) in 16S rRNA + S-adenosyl-L-homocysteine + H(+). Its function is as follows. Specifically methylates the N4 position of cytidine in position 1402 (C1402) of 16S rRNA. This Bacillus cereus (strain AH187) protein is Ribosomal RNA small subunit methyltransferase H.